A 196-amino-acid chain; its full sequence is 3-isopropylmalate dehydratase small subunit (196 aa).

Belongs to the LeuD family. LeuD type 1 subfamily. As to quaternary structure, heterodimer of LeuC and LeuD.

The catalysed reaction is (2R,3S)-3-isopropylmalate = (2S)-2-isopropylmalate. It participates in amino-acid biosynthesis; L-leucine biosynthesis; L-leucine from 3-methyl-2-oxobutanoate: step 2/4. Functionally, catalyzes the isomerization between 2-isopropylmalate and 3-isopropylmalate, via the formation of 2-isopropylmaleate. The chain is 3-isopropylmalate dehydratase small subunit from Streptococcus thermophilus (strain CNRZ 1066).